A 240-amino-acid chain; its full sequence is MAPK-interacting and spindle-stabilizing protein-like (240 aa).

Residues 1–240 (MSDEFSLADA…PMPGGPHSYH (240 aa)) form a disordered region. N-acetylserine is present on S2. S2, S6, and S15 each carry phosphoserine. The segment covering 16–26 (PAKTSAVSNTK) has biased composition (polar residues). The segment covering 34–43 (WPGSNPWNNP) has biased composition (low complexity). Composition is skewed to pro residues over residues 44 to 66 (SAPP…PFGP), 74 to 122 (SVPP…PELP), 159 to 185 (PNMP…PPVP), and 193 to 202 (AWGPPAPYPA).

Belongs to the MISS family.

The sequence is that of MAPK-interacting and spindle-stabilizing protein-like (MAPK1IP1L) from Bos taurus (Bovine).